We begin with the raw amino-acid sequence, 151 residues long: Probable cGMP 3',5'-cyclic phosphodiesterase subunit delta (151 aa).

This sequence belongs to the PDE6D/unc-119 family. As to quaternary structure, interacts with Pde6.

It is found in the nucleus. The protein localises to the cytoplasm. The sequence is that of Probable cGMP 3',5'-cyclic phosphodiesterase subunit delta from Culex quinquefasciatus (Southern house mosquito).